A 1341-amino-acid polypeptide reads, in one-letter code: DNA-directed RNA polymerase subunit beta (1341 aa).

Belongs to the RNA polymerase beta chain family. The RNAP catalytic core consists of 2 alpha, 1 beta, 1 beta' and 1 omega subunit. When a sigma factor is associated with the core the holoenzyme is formed, which can initiate transcription.

It catalyses the reaction RNA(n) + a ribonucleoside 5'-triphosphate = RNA(n+1) + diphosphate. DNA-dependent RNA polymerase catalyzes the transcription of DNA into RNA using the four ribonucleoside triphosphates as substrates. In Photobacterium profundum (strain SS9), this protein is DNA-directed RNA polymerase subunit beta.